A 428-amino-acid chain; its full sequence is Glutamine synthetase, chloroplastic (428 aa).

The N-terminal 49 residues, 1 to 49 (MAQILAASPTCQMRLTKPSSIASSKLWNSVVLKQKKQSSSKVRSFKVMA), are a transit peptide targeting the chloroplast. One can recognise a GS beta-grasp domain in the interval 75–155 (IIAEYIWIGG…VICDTYTPAG (81 aa)). Positions 94-120 (RTLEKPVEDPSELPKWNYDGSSTGQAP) are disordered. The residue at position 104 (S104) is a Phosphoserine. One can recognise a GS catalytic domain in the interval 159–428 (PTNKRARAAE…LAAQKLSLKV (270 aa)).

This sequence belongs to the glutamine synthetase family. As to quaternary structure, homooctamer.

It localises to the plastid. The protein resides in the chloroplast. It catalyses the reaction L-glutamate + NH4(+) + ATP = L-glutamine + ADP + phosphate + H(+). Its function is as follows. The light-modulated chloroplast enzyme, encoded by a nuclear gene and expressed primarily in leaves, is responsible for the reassimilation of the ammonia generated by photorespiration. This chain is Glutamine synthetase, chloroplastic (GLN2), found in Brassica napus (Rape).